The chain runs to 353 residues: Rhodopsin (353 aa).

Topologically, residues Met-1–Ala-36 are extracellular. 2 N-linked (GlcNAc...) asparagine glycosylation sites follow: Asn-2 and Asn-15. Residues Tyr-37 to Val-61 traverse the membrane as a helical segment. The Cytoplasmic segment spans residues Thr-62–Asn-73. The chain crosses the membrane as a helical span at residues Tyr-74–Tyr-96. The Extracellular segment spans residues Thr-97–Cys-110. An intrachain disulfide couples Cys-110 to Cys-187. Residues Asn-111–Val-133 traverse the membrane as a helical segment. The short motif at Glu-134–Trp-136 is the 'Ionic lock' involved in activated form stabilization element. Residues Glu-134–His-152 are Cytoplasmic-facing. Residues Ala-153–Val-173 traverse the membrane as a helical segment. The Extracellular portion of the chain corresponds to Gly-174–Ser-202. A glycan (N-linked (GlcNAc...) asparagine) is linked at Asn-200. A helical membrane pass occupies residues Phe-203–Gly-224. The Cytoplasmic portion of the chain corresponds to Arg-225–Arg-252. A helical membrane pass occupies residues Met-253–Tyr-274. The Extracellular portion of the chain corresponds to Ile-275–Leu-286. Residues Phe-287–Phe-308 traverse the membrane as a helical segment. Lys-296 is subject to N6-(retinylidene)lysine. Over Met-309–Ala-353 the chain is Cytoplasmic. S-palmitoyl cysteine attachment occurs at residues Cys-322 and Cys-323. Residues Glu-329–Ala-353 are disordered. Positions Ser-334–Ala-353 are enriched in low complexity.

Belongs to the G-protein coupled receptor 1 family. Opsin subfamily. Phosphorylated on some or all of the serine and threonine residues present in the C-terminal region. Post-translationally, contains one covalently linked retinal chromophore.

The protein resides in the membrane. It is found in the cell projection. It localises to the cilium. Its subcellular location is the photoreceptor outer segment. Functionally, photoreceptor required for image-forming vision at low light intensity. While most salt water fish species use retinal as chromophore, most freshwater fish use 3-dehydroretinal, or a mixture of retinal and 3-dehydroretinal. Light-induced isomerization of 11-cis to all-trans retinal triggers a conformational change that activates signaling via G-proteins. Subsequent receptor phosphorylation mediates displacement of the bound G-protein alpha subunit by arrestin and terminates signaling. The protein is Rhodopsin (rho) of Solea solea (Common sole).